Reading from the N-terminus, the 291-residue chain is NAD kinase (291 aa).

Asp72 (proton acceptor) is an active-site residue. Residues 72-73 (DG), 146-147 (ND), Arg157, Arg174, Asp176, 187-192 (TAYSLS), and Gln247 each bind NAD(+).

This sequence belongs to the NAD kinase family. Requires a divalent metal cation as cofactor.

The protein resides in the cytoplasm. The enzyme catalyses NAD(+) + ATP = ADP + NADP(+) + H(+). Involved in the regulation of the intracellular balance of NAD and NADP, and is a key enzyme in the biosynthesis of NADP. Catalyzes specifically the phosphorylation on 2'-hydroxyl of the adenosine moiety of NAD to yield NADP. In Hydrogenovibrio crunogenus (strain DSM 25203 / XCL-2) (Thiomicrospira crunogena), this protein is NAD kinase.